The following is a 236-amino-acid chain: uncharacterized protein (236 aa).

This is an uncharacterized protein from Escherichia coli O157:H7.